The sequence spans 96 residues: C-C motif chemokine 20 (96 aa).

An N-terminal signal peptide occupies residues Met1–Ala26. Disulfide bonds link Cys32-Cys58 and Cys33-Cys74.

This sequence belongs to the intercrine beta (chemokine CC) family. C-terminal processed forms which lack 1, 3 or 6 amino acids are produced by proteolytic cleavage after secretion from peripheral blood monocytes. As to expression, expressed in the seminal plasma, endometrial fluid and follicular fluid (at protein level). Expressed predominantly in the liver, lymph nodes, appendix, peripheral blood lymphocytes, and fetal lung. Low levels seen in thymus, prostate, testis, small intestine and colon.

Its subcellular location is the secreted. Its function is as follows. Acts as a ligand for C-C chemokine receptor CCR6. Signals through binding and activation of CCR6 and induces a strong chemotactic response and mobilization of intracellular calcium ions. The ligand-receptor pair CCL20-CCR6 is responsible for the chemotaxis of dendritic cells (DC), effector/memory T-cells and B-cells and plays an important role at skin and mucosal surfaces under homeostatic and inflammatory conditions, as well as in pathology, including cancer and various autoimmune diseases. CCL20 acts as a chemotactic factor that attracts lymphocytes and, slightly, neutrophils, but not monocytes. Involved in the recruitment of both the pro-inflammatory IL17 producing helper T-cells (Th17) and the regulatory T-cells (Treg) to sites of inflammation. Required for optimal migration of thymic natural regulatory T cells (nTregs) and DN1 early thymocyte progenitor cells. C-terminal processed forms have been shown to be equally chemotactically active for leukocytes. Positively regulates sperm motility and chemotaxis via its binding to CCR6 which triggers Ca2+ mobilization in the sperm which is important for its motility. Inhibits proliferation of myeloid progenitors in colony formation assays. May be involved in formation and function of the mucosal lymphoid tissues by attracting lymphocytes and dendritic cells towards epithelial cells. Possesses antibacterial activity towards E.coli ATCC 25922 and S.aureus ATCC 29213. The sequence is that of C-C motif chemokine 20 (CCL20) from Homo sapiens (Human).